The following is a 173-amino-acid chain: Small ribosomal subunit protein mS25 (173 aa).

This sequence belongs to the mitochondrion-specific ribosomal protein mS25 family. In terms of assembly, component of the mitochondrial small ribosomal subunit (mt-SSU). Mature mammalian 55S mitochondrial ribosomes consist of a small (28S) and a large (39S) subunit. The 28S small subunit contains a 12S ribosomal RNA (12S mt-rRNA) and 30 different proteins. The 39S large subunit contains a 16S rRNA (16S mt-rRNA), a copy of mitochondrial valine transfer RNA (mt-tRNA(Val)), which plays an integral structural role, and 52 different proteins.

It localises to the mitochondrion. This chain is Small ribosomal subunit protein mS25 (MRPS25), found in Homo sapiens (Human).